The sequence spans 400 residues: MLARRKPVLPALTINPTIAEGPSPTSEGASEAHLVDLQKKLEELDLDEQQRKRLEAFLTQKAKVGELKDDDFERISELGAGNGGVVTKARHRPSGLIMARKLIHLEIKPAVRNQIIRELQVLHECNSPYIVGFYGAFYSDGEISICMEHMDGGSLDQVLKEAKRIPEDILGKVSIAVLRGLAYLREKHQIMHRDVKPSNILVNSRGEIKLCDFGVSGQLIDSMANSFVGTRSYMSPERLQGTHYSVQSDIWSMGLSLVELAIGRYPIPPPDAKELEASFGRPVVDGADGEPHSVSPRPRPPGRPISGHGMDSRPAMAIFELLDYIVNEPPPKLPSGVFSSDFQEFVNKCLIKNPAERADLKLLTNHAFIKRSEGEDVDFAGWLCRTLRLKQPSTPTRTAV.

An N-acetylmethionine modification is found at methionine 1. Serine 23 bears the Phosphoserine mark. Positions 72 to 369 (FERISELGAG…LKLLTNHAFI (298 aa)) constitute a Protein kinase domain. ATP contacts are provided by residues 78–86 (LGAGNGGVV) and lysine 101. Residue aspartate 194 is the Proton acceptor of the active site. Residues serine 222 and serine 226 each carry the phosphoserine; by RAF modification. A disordered region spans residues 282 to 310 (PVVDGADGEPHSVSPRPRPPGRPISGHGM). Serine 293, serine 295, and serine 306 each carry phosphoserine. Residues threonine 394 and threonine 396 each carry the phosphothreonine modification.

The protein belongs to the protein kinase superfamily. STE Ser/Thr protein kinase family. MAP kinase kinase subfamily. In terms of assembly, interacts with MORG1. Interacts with SGK1. Interacts with KSR1. Interacts with KSR1 and BRAF; the interaction with KSR1 mediates KSR1-BRAF dimerization. Interacts with GLS. The cofactor is Mg(2+). In terms of processing, MAPKK is itself dependent on Ser/Thr phosphorylation for activity catalyzed by MAP kinase kinase kinases (RAF or MEKK1). Phosphorylated by MAP2K1/MEK1. In terms of tissue distribution, expressed abundantly in the adult brain and muscle.

It is found in the cytoplasm. It localises to the membrane. It catalyses the reaction L-seryl-[protein] + ATP = O-phospho-L-seryl-[protein] + ADP + H(+). It carries out the reaction L-threonyl-[protein] + ATP = O-phospho-L-threonyl-[protein] + ADP + H(+). The enzyme catalyses L-tyrosyl-[protein] + ATP = O-phospho-L-tyrosyl-[protein] + ADP + H(+). Its function is as follows. Catalyzes the concomitant phosphorylation of a threonine and a tyrosine residue in a Thr-Glu-Tyr sequence located in MAP kinases. Activates the ERK1 and ERK2 MAP kinases. Activates BRAF in a KSR1 or KSR2-dependent manner; by binding to KSR1 or KSR2 releases the inhibitory intramolecular interaction between KSR1 or KSR2 protein kinase and N-terminal domains which promotes KSR1 or KSR2-BRAF dimerization and BRAF activation. In Rattus norvegicus (Rat), this protein is Dual specificity mitogen-activated protein kinase kinase 2 (Map2k2).